Here is a 71-residue protein sequence, read N- to C-terminus: GSRSSFSPTQAFLTLQQASSTPRTGGVGSYQFVREFVPEVYLNPFSGPPDTFPDQFIPNYDIVTNSVDGYD.

This sequence belongs to the adenoviridae hexon-linking protein family. As to quaternary structure, interacts with the peripentonal hexons as well as the hexons in the facets. Part of a complex composed of the core-capsid bridging protein, the endosome lysis protein VI and the hexon-linking protein VIII; these interactions bridge the virus core to the capsid. In terms of processing, cleaved by the viral protease during virion maturation. May cause the middle segment to be shed from the capsid.

The protein localises to the host nucleus. It is found in the virion. Functionally, structural component of the virion that acts as a cement protein on the capsid interior and which glue the peripentonal hexons and group-of-nine hexons together. The polypeptide is Pre-hexon-linking protein VIII (Canine adenovirus serotype 1 (strain Glaxo) (CAdV-1)).